A 260-amino-acid polypeptide reads, in one-letter code: Small ribosomal subunit protein eS1 (260 aa).

The span at 1 to 18 (MAVGKNKRMSKGKKGGKK) shows a compositional bias: basic residues. The disordered stretch occupies residues 1–20 (MAVGKNKRMSKGKKGGKKKA).

Belongs to the eukaryotic ribosomal protein eS1 family. As to quaternary structure, component of the small ribosomal subunit. Mature ribosomes consist of a small (40S) and a large (60S) subunit. The 40S subunit contains about 33 different proteins and 1 molecule of RNA (18S). The 60S subunit contains about 49 different proteins and 3 molecules of RNA (25S, 5.8S and 5S).

The protein localises to the cytoplasm. The chain is Small ribosomal subunit protein eS1 from Ostreococcus lucimarinus (strain CCE9901).